Here is a 309-residue protein sequence, read N- to C-terminus: Porphobilinogen deaminase (309 aa).

At C242 the chain carries S-(dipyrrolylmethanemethyl)cysteine.

Belongs to the HMBS family. As to quaternary structure, monomer. It depends on dipyrromethane as a cofactor.

The enzyme catalyses 4 porphobilinogen + H2O = hydroxymethylbilane + 4 NH4(+). It functions in the pathway porphyrin-containing compound metabolism; protoporphyrin-IX biosynthesis; coproporphyrinogen-III from 5-aminolevulinate: step 2/4. Tetrapolymerization of the monopyrrole PBG into the hydroxymethylbilane pre-uroporphyrinogen in several discrete steps. The protein is Porphobilinogen deaminase of Syntrophobacter fumaroxidans (strain DSM 10017 / MPOB).